The following is a 376-amino-acid chain: Succinyl-diaminopimelate desuccinylase (376 aa).

Residue His-67 coordinates Zn(2+). Asp-69 is a catalytic residue. Zn(2+) is bound at residue Asp-100. Glu-134 serves as the catalytic Proton acceptor. Residues Glu-135, Glu-163, and His-349 each contribute to the Zn(2+) site.

Belongs to the peptidase M20A family. DapE subfamily. Homodimer. Zn(2+) serves as cofactor. It depends on Co(2+) as a cofactor.

The enzyme catalyses N-succinyl-(2S,6S)-2,6-diaminopimelate + H2O = (2S,6S)-2,6-diaminopimelate + succinate. It functions in the pathway amino-acid biosynthesis; L-lysine biosynthesis via DAP pathway; LL-2,6-diaminopimelate from (S)-tetrahydrodipicolinate (succinylase route): step 3/3. Catalyzes the hydrolysis of N-succinyl-L,L-diaminopimelic acid (SDAP), forming succinate and LL-2,6-diaminopimelate (DAP), an intermediate involved in the bacterial biosynthesis of lysine and meso-diaminopimelic acid, an essential component of bacterial cell walls. The protein is Succinyl-diaminopimelate desuccinylase of Haemophilus ducreyi (strain 35000HP / ATCC 700724).